The sequence spans 146 residues: Hemoglobin cathodic subunit beta (146 aa).

The region spanning 2 to 146 (QWSSSERSVI…VVSGLSKQYF (145 aa)) is the Globin domain. His-63 is a heme b binding site.

As to quaternary structure, heterotetramer of two alpha and two beta chains. In terms of tissue distribution, red blood cells.

In terms of biological role, involved in oxygen transport from the gills to various peripheral tissues. This Ophisurus serpens (Serpent eel) protein is Hemoglobin cathodic subunit beta.